Consider the following 113-residue polypeptide: Small ribosomal subunit protein bS6 (113 aa).

Belongs to the bacterial ribosomal protein bS6 family.

Binds together with bS18 to 16S ribosomal RNA. The polypeptide is Small ribosomal subunit protein bS6 (rpsF) (Buchnera aphidicola subsp. Acyrthosiphon pisum (strain APS) (Acyrthosiphon pisum symbiotic bacterium)).